A 717-amino-acid chain; its full sequence is DNA ligase (717 aa).

Residues 44-48 (DAEYD), 93-94 (SL), and glutamate 127 each bind NAD(+). Catalysis depends on lysine 129, which acts as the N6-AMP-lysine intermediate. NAD(+) contacts are provided by arginine 150, glutamate 186, lysine 302, and lysine 326. Residues cysteine 431, cysteine 434, cysteine 455, and cysteine 461 each coordinate Zn(2+). Positions 639–717 (TSGSPVVGKT…EDEWLELIGG (79 aa)) constitute a BRCT domain.

It belongs to the NAD-dependent DNA ligase family. LigA subfamily. Mg(2+) is required as a cofactor. Mn(2+) serves as cofactor.

The catalysed reaction is NAD(+) + (deoxyribonucleotide)n-3'-hydroxyl + 5'-phospho-(deoxyribonucleotide)m = (deoxyribonucleotide)n+m + AMP + beta-nicotinamide D-nucleotide.. DNA ligase that catalyzes the formation of phosphodiester linkages between 5'-phosphoryl and 3'-hydroxyl groups in double-stranded DNA using NAD as a coenzyme and as the energy source for the reaction. It is essential for DNA replication and repair of damaged DNA. In Rhizobium rhizogenes (strain K84 / ATCC BAA-868) (Agrobacterium radiobacter), this protein is DNA ligase.